Reading from the N-terminus, the 261-residue chain is Zinc finger protein 664 (261 aa).

9 consecutive C2H2-type zinc fingers follow at residues 3–25 (YKCP…QKVH), 31–53 (HKCD…WRDH), 59–81 (YKCD…KKIH), 87–109 (YKCY…MRVH), 115–137 (YVCS…QRVH), 143–165 (FKCE…QRVH), 171–193 (YKCY…QRVH), 199–221 (YRCC…QRVH), and 227–249 (FKCD…QRVH). Lys-257 participates in a covalent cross-link: Glycyl lysine isopeptide (Lys-Gly) (interchain with G-Cter in SUMO2).

The protein belongs to the krueppel C2H2-type zinc-finger protein family. As to expression, expressed in the organ of Corti, stria vascularis, auditory nerve and retina. Lower levels in the tongue, cerebellum, small intestine and kidney.

It localises to the nucleus. Its function is as follows. May be involved in transcriptional regulation. This is Zinc finger protein 664 (ZNF664) from Cavia porcellus (Guinea pig).